The following is a 512-amino-acid chain: Centrosomal protein CCDC61 (512 aa).

Methionine 1 carries the N-acetylmethionine modification. The interval 1 to 143 is head domain; the sequence is MDQPAGLQVD…PLPLPYQGKP (143 aa). Coiled-coil stretches lie at residues 178 to 205 and 248 to 275; these read IWHL…SREE and CRRL…LTSE. Residues 276–477 form a disordered region; sequence LALYKRGRRT…KSLANSGGWV (202 aa). Phosphothreonine is present on threonine 285. Residues 293–306 are compositionally biased toward basic and acidic residues; sequence TREDRASSSRERSA. Phosphoserine is present on residues serine 334, serine 336, serine 373, and serine 376. Residues 407 to 425 are compositionally biased toward low complexity; sequence RSSSVDSFRSRCSSASSCS. 2 positions are modified to phosphoserine: serine 447 and serine 473.

Belongs to the CCDC61 family. As to quaternary structure, forms homodimers (via head domain). Interacts with CEP170. Interacts with PCM1 and CEP131. Binds tubulin.

It is found in the cytoplasm. The protein resides in the cytoskeleton. Its subcellular location is the microtubule organizing center. It localises to the centrosome. The protein localises to the centriolar satellite. It is found in the cilium basal body. In terms of biological role, microtubule-binding centrosomal protein required for centriole cohesion, independently of the centrosome-associated protein/CEP250 and rootletin/CROCC linker. In interphase, required for anchoring microtubule at the mother centriole subdistal appendages and for centrosome positioning. During mitosis, may be involved in spindle assembly and chromatin alignment by regulating the organization of spindle microtubules into a symmetrical structure. Has been proposed to play a role in CEP170 recruitment to centrosomes. However, this function could not be confirmed. Plays a non-essential role in ciliogenesis. The sequence is that of Centrosomal protein CCDC61 from Homo sapiens (Human).